Reading from the N-terminus, the 179-residue chain is Large ribosomal subunit protein uL5c (179 aa).

The protein belongs to the universal ribosomal protein uL5 family. Part of the 50S ribosomal subunit; contacts the 5S rRNA.

Its subcellular location is the plastid. The protein resides in the chloroplast. Its function is as follows. Binds 5S rRNA, forms part of the central protuberance of the 50S subunit. This is Large ribosomal subunit protein uL5c (rpl5) from Gracilaria tenuistipitata var. liui (Red alga).